The chain runs to 27 residues: uncharacterized protein (27 aa).

The protein resides in the mitochondrion. This is an uncharacterized protein from Emericella nidulans (Aspergillus nidulans).